A 277-amino-acid polypeptide reads, in one-letter code: Probable CCR4-associated factor 1 homolog 10 (277 aa).

Residues aspartate 40, glutamate 42, aspartate 166, and aspartate 235 each contribute to the a divalent metal cation site.

This sequence belongs to the CAF1 family. As to quaternary structure, component of the CCR4-NOT complex, at least composed of CRR4 and CAF1 proteins. It depends on a divalent metal cation as a cofactor.

Its subcellular location is the nucleus. The protein localises to the cytoplasm. It carries out the reaction Exonucleolytic cleavage of poly(A) to 5'-AMP.. Ubiquitous transcription factor required for a diverse set of processes. It is a component of the CCR4 complex involved in the control of gene expression. The chain is Probable CCR4-associated factor 1 homolog 10 (CAF1-10) from Arabidopsis thaliana (Mouse-ear cress).